The following is a 316-amino-acid chain: Pantothenate kinase (316 aa).

95-102 contacts ATP; the sequence is GSVAVGKS.

This sequence belongs to the prokaryotic pantothenate kinase family.

Its subcellular location is the cytoplasm. It carries out the reaction (R)-pantothenate + ATP = (R)-4'-phosphopantothenate + ADP + H(+). It functions in the pathway cofactor biosynthesis; coenzyme A biosynthesis; CoA from (R)-pantothenate: step 1/5. The protein is Pantothenate kinase of Klebsiella pneumoniae subsp. pneumoniae (strain ATCC 700721 / MGH 78578).